An 87-amino-acid polypeptide reads, in one-letter code: Tan_10cys (87 aa).

A signal peptide spans 1–21 (MNLKVLFLLAMVLVTLCLGED). A propeptide spanning residues 22–27 (RVTDRR) is cleaved from the precursor.

It belongs to the teretoxin C (TC) superfamily. In terms of processing, contains 5 disulfide bonds. In terms of tissue distribution, expressed by the venom duct.

It is found in the secreted. The sequence is that of Tan_10cys from Terebra anilis (Auger snail).